Consider the following 110-residue polypeptide: Large ribosomal subunit protein uL22 (110 aa).

Belongs to the universal ribosomal protein uL22 family. Part of the 50S ribosomal subunit.

Its function is as follows. This protein binds specifically to 23S rRNA; its binding is stimulated by other ribosomal proteins, e.g. L4, L17, and L20. It is important during the early stages of 50S assembly. It makes multiple contacts with different domains of the 23S rRNA in the assembled 50S subunit and ribosome. Functionally, the globular domain of the protein is located near the polypeptide exit tunnel on the outside of the subunit, while an extended beta-hairpin is found that lines the wall of the exit tunnel in the center of the 70S ribosome. This is Large ribosomal subunit protein uL22 from Methylococcus capsulatus (strain ATCC 33009 / NCIMB 11132 / Bath).